The chain runs to 400 residues: Inositol polyphosphate 1-phosphatase (400 aa).

Asp54 is a binding site for Li(+). Glu79 is a binding site for Mg(2+). Glu80 is a binding site for Li(+). 2 residues coordinate Mg(2+): Asp153 and Ile155. 3 residues coordinate 1D-myo-inositol 1,4-bisphosphate: Asp156, Ser157, and Thr158. Polar residues predominate over residues 238-257 (STRSNSEAQSQGTQNPSSEG). Positions 238–258 (STRSNSEAQSQGTQNPSSEGS) are disordered. The 1D-myo-inositol 1,4-bisphosphate site is built by Ser268, Lys270, Gly290, Ala291, Lys294, and Thr312. A Mg(2+)-binding site is contributed by Asp317. Ser318 carries the post-translational modification Phosphoserine.

Belongs to the inositol monophosphatase superfamily. Monomer. It depends on Mg(2+) as a cofactor.

The enzyme catalyses 1D-myo-inositol 1,4-bisphosphate + H2O = 1D-myo-inositol 4-phosphate + phosphate. It carries out the reaction 1D-myo-inositol 1,3,4-trisphosphate + H2O = 1D-myo-inositol 3,4-bisphosphate + phosphate. It participates in signal transduction; phosphatidylinositol signaling pathway. With respect to regulation, inhibited by Li(+). Mg(2+)-dependent phosphatase that catalyzes the hydrolysis of the 1-position phosphate from inositol 1,4-bisphosphate and inositol 1,3,4-trisphosphate and participates in inositol phosphate metabolism. The protein is Inositol polyphosphate 1-phosphatase of Bos taurus (Bovine).